A 376-amino-acid chain; its full sequence is 4-hydroxy-3-methylbut-2-en-1-yl diphosphate synthase (flavodoxin) (376 aa).

[4Fe-4S] cluster contacts are provided by Cys-272, Cys-275, Cys-307, and Glu-314.

This sequence belongs to the IspG family. The cofactor is [4Fe-4S] cluster.

It catalyses the reaction (2E)-4-hydroxy-3-methylbut-2-enyl diphosphate + oxidized [flavodoxin] + H2O + 2 H(+) = 2-C-methyl-D-erythritol 2,4-cyclic diphosphate + reduced [flavodoxin]. Its pathway is isoprenoid biosynthesis; isopentenyl diphosphate biosynthesis via DXP pathway; isopentenyl diphosphate from 1-deoxy-D-xylulose 5-phosphate: step 5/6. In terms of biological role, converts 2C-methyl-D-erythritol 2,4-cyclodiphosphate (ME-2,4cPP) into 1-hydroxy-2-methyl-2-(E)-butenyl 4-diphosphate. The sequence is that of 4-hydroxy-3-methylbut-2-en-1-yl diphosphate synthase (flavodoxin) from Blochmanniella pennsylvanica (strain BPEN).